The primary structure comprises 318 residues: Aspartate carbamoyltransferase catalytic subunit (318 aa).

Arg-67 and Thr-68 together coordinate carbamoyl phosphate. Residue Lys-95 participates in L-aspartate binding. Residues Arg-117, His-145, and Gln-148 each contribute to the carbamoyl phosphate site. The L-aspartate site is built by Arg-178 and Arg-236. Carbamoyl phosphate-binding residues include Gly-277 and Pro-278.

This sequence belongs to the aspartate/ornithine carbamoyltransferase superfamily. ATCase family. In terms of assembly, heterododecamer (2C3:3R2) of six catalytic PyrB chains organized as two trimers (C3), and six regulatory PyrI chains organized as three dimers (R2).

It carries out the reaction carbamoyl phosphate + L-aspartate = N-carbamoyl-L-aspartate + phosphate + H(+). The protein operates within pyrimidine metabolism; UMP biosynthesis via de novo pathway; (S)-dihydroorotate from bicarbonate: step 2/3. In terms of biological role, catalyzes the condensation of carbamoyl phosphate and aspartate to form carbamoyl aspartate and inorganic phosphate, the committed step in the de novo pyrimidine nucleotide biosynthesis pathway. This chain is Aspartate carbamoyltransferase catalytic subunit, found in Roseiflexus sp. (strain RS-1).